The sequence spans 119 residues: Toxin ICK-8 (119 aa).

The signal sequence occupies residues 1 to 19 (MMKLYSLVIIATLAAAAFA). 4 cysteine pairs are disulfide-bonded: C59–C74, C67–C80, C71–C116, and C73–C87.

The protein belongs to the neurotoxin 25 family. ICK-8 subfamily. As to expression, expressed by the venom gland.

It localises to the secreted. Ion channel inhibitor. This Trittame loki (Brush-footed trapdoor spider) protein is Toxin ICK-8.